A 334-amino-acid chain; its full sequence is Heat-inducible transcription repressor HrcA (334 aa).

This sequence belongs to the HrcA family.

In terms of biological role, negative regulator of class I heat shock genes (grpE-dnaK-dnaJ and groELS operons). Prevents heat-shock induction of these operons. The protein is Heat-inducible transcription repressor HrcA of Bordetella bronchiseptica (strain ATCC BAA-588 / NCTC 13252 / RB50) (Alcaligenes bronchisepticus).